The primary structure comprises 194 residues: GTP cyclohydrolase 1 (194 aa).

3 residues coordinate Zn(2+): Cys-83, His-86, and Cys-155.

It belongs to the GTP cyclohydrolase I family. Toroid-shaped homodecamer, composed of two pentamers of five dimers.

The catalysed reaction is GTP + H2O = 7,8-dihydroneopterin 3'-triphosphate + formate + H(+). Its pathway is cofactor biosynthesis; 7,8-dihydroneopterin triphosphate biosynthesis; 7,8-dihydroneopterin triphosphate from GTP: step 1/1. The polypeptide is GTP cyclohydrolase 1 (Streptococcus pyogenes serotype M3 (strain ATCC BAA-595 / MGAS315)).